We begin with the raw amino-acid sequence, 99 residues long: A-type ATP synthase subunit F (99 aa).

This sequence belongs to the V-ATPase F subunit family. In terms of assembly, has multiple subunits with at least A(3), B(3), C, D, E, F, H, I and proteolipid K(x).

Its subcellular location is the cell membrane. Component of the A-type ATP synthase that produces ATP from ADP in the presence of a proton gradient across the membrane. This is A-type ATP synthase subunit F from Methanococcus vannielii (strain ATCC 35089 / DSM 1224 / JCM 13029 / OCM 148 / SB).